The primary structure comprises 360 residues: G-protein coupled receptor 15 (360 aa).

The Extracellular portion of the chain corresponds to 1–33 (MDPEETSVYLDYYYATSPNSDIRETHSHVPYTS). A helical transmembrane segment spans residues 34–54 (VFLPVFYTAVFLTGVLGNLVL). The Cytoplasmic portion of the chain corresponds to 55 to 69 (MGALHFKPGSRRLID). A helical transmembrane segment spans residues 70–90 (IFIINLAASDFIFLVTLPLWV). The Extracellular portion of the chain corresponds to 91 to 120 (DKEASLGLWRTGSFLCKGSSYMISVNMHCS). The helical transmembrane segment at 121-141 (VLLLTCMSVDRYLAIVWPVVS) threads the bilayer. The Cytoplasmic segment spans residues 142–149 (RKFRRTDC). Residues 150–170 (AYVVCASIWFISCLLGLPTLL) form a helical membrane-spanning segment. Residues 171–192 (SRELTLIDDKPYCAEKKATPIK) lie on the Extracellular side of the membrane. The helical transmembrane segment at 193-213 (LIWSLVALIFTFFVPLLSIVT) threads the bilayer. Topologically, residues 214-239 (CYCCIARKLCAHYQQSGKHNKKLKKS) are cytoplasmic. The chain crosses the membrane as a helical span at residues 240-260 (IKIIFIVVAAFLVSWLPFNTF). Topologically, residues 261–284 (KFLAIVSGLRQEHYLPSAILQLGM) are extracellular. Residues 285 to 305 (EVSGPLAFANSCVNPFIYYIF) form a helical membrane-spanning segment. The Cytoplasmic portion of the chain corresponds to 306 to 360 (DSYIRRAIVHCLCPCLKNYDFGSSTETSDSHLTKALSTFIHAEDFARRRKRSVSL). At S359 the chain carries Phosphoserine.

The protein belongs to the G-protein coupled receptor 1 family. As to quaternary structure, interacts with adapter YWHAE; this interaction promotes ER-to-Golgi transport of GPR15. Interacts with GNAI1; this interaction initiates the signaling pathway. Post-translationally, phosphorylation is necessary for YWHAE binding and efficient surface expression. In terms of processing, O-glycosylated. Sialylated O-glycans in the N-terminal tail inhibits binding of GPR15LG. Sulfation is required for efficient binding of GPR15LG. As to expression, highly expressed in lymphoid tissues, including macrophages and peripheral blood mononuclear cells.

Its subcellular location is the cell membrane. G protein-coupled receptor that plays an important role in immune homeostasis. Acts via its natural ligand GPR15LG, a chemokine-like polypeptide strongly expressed in gastrointestinal tissues. GPR15-GPR15LG signaling axis regulates intestinal homeostasis and inflammation through the migration of immune cells. Controls thereby the specific homing of T-cells, particularly FOXP3+ regulatory T-cells (Tregs), to the large intestine lamina propria. Also required for skin localization of thymus-derived dendritic epidermal T-cells. Plays an important role in mediating cytoprotective function as well as angiogenesis of thrombomodulin. Mechanistically, preferentially signals through the Gi/o pathway to inhibit adenylate cyclase activity and activate a phosphatidylinositol-calcium second messenger system that regulates the release of Ca(2+) ions from intracellular stores. In terms of biological role, (Microbial infection) Acts as an alternative coreceptor with CD4 for HIV-1 infection. This Homo sapiens (Human) protein is G-protein coupled receptor 15 (GPR15).